A 170-amino-acid chain; its full sequence is Anaphase-promoting complex subunit SWM1 (170 aa).

2 stretches are compositionally biased toward basic and acidic residues: residues 48–67 (NTRTDAEEGRAPQDGERNSN) and 132–141 (GANEPRKETI). Disordered regions lie at residues 48–81 (NTRTDAEEGRAPQDGERNSNVRESAQGKALMTSE) and 122–141 (LNGGTNSRNDGANEPRKETI).

The protein belongs to the APC13 family. As to quaternary structure, the APC/C is composed of at least 13 subunits that stay tightly associated throughout the cell cycle: APC1, APC2, APC4, APC5, APC9, APC11, CDC16, CDC23, CDC26, CDC27, DOC1, MND2 and SWM1. SWM1 interacts directly with CDC23 and APC5, and is required to tether APC9, CDC16, CDC26 and CDC27 to the complex.

It participates in protein modification; protein ubiquitination. Functionally, component of the anaphase promoting complex/cyclosome (APC/C), a cell cycle-regulated E3 ubiquitin-protein ligase complex that controls progression through mitosis and the G1 phase of the cell cycle. The APC/C is thought to confer substrate specificity and, in the presence of ubiquitin-conjugating E2 enzymes, it catalyzes the formation of protein-ubiquitin conjugates that are subsequently degraded by the 26S proteasome. In early mitosis, the APC/C is activated by CDC20 and targets securin PDS1, the B-type cyclin CLB5, and other anaphase inhibitory proteins for proteolysis, thereby triggering the separation of sister chromatids at the metaphase-to-anaphase transition. In late mitosis and in G1, degradation of CLB5 allows activation of the APC/C by CDH1, which is needed to destroy CDC20 and the B-type cyclin CLB2 to allow exit from mitosis and creating the low CDK state necessary for cytokinesis and for reforming prereplicative complexes in G1 prior to another round of replication. SWM1 is required for APC/C activity in meiosis. The protein is Anaphase-promoting complex subunit SWM1 (SWM1) of Saccharomyces cerevisiae (strain ATCC 204508 / S288c) (Baker's yeast).